Reading from the N-terminus, the 332-residue chain is MDPRSEVMLRQAELFQGPLLIAGAPADGLLGQLPKAHGWTWHAGDQALLESRFGNRCHHGVGVPEVAFDAAILFLPKSRELAAYLLNALAARLAGRELYLVGEKRGGIEGAAKQLQAFGKPRKLDSARHCQLWQVTVDHAPEAKPLESLAERFELPLEDGPLQVVSLPGVFSHGRLDKGTALLLEHLDGLPSGHVLDFGCGAGVLGATIKRRYPQSQVTLLDVDAFAVAASRLTLAANGLEGQVISGDGIDAAPGELDLILSNPPFHTGVHTDYQASENLLKKSGEHLRKGGEIRLVANSFLRYQPLIEGALGNCEIRAEAQGFRIYRATRG.

This sequence belongs to the methyltransferase superfamily. RsmC family. As to quaternary structure, monomer.

It localises to the cytoplasm. The enzyme catalyses guanosine(1207) in 16S rRNA + S-adenosyl-L-methionine = N(2)-methylguanosine(1207) in 16S rRNA + S-adenosyl-L-homocysteine + H(+). Its function is as follows. Specifically methylates the guanine in position 1207 of 16S rRNA in the 30S particle. The polypeptide is Ribosomal RNA small subunit methyltransferase C (Pseudomonas entomophila (strain L48)).